The sequence spans 309 residues: MEMO1 family protein C4H3.04c (309 aa).

It belongs to the MEMO1 family.

The chain is MEMO1 family protein C4H3.04c from Schizosaccharomyces pombe (strain 972 / ATCC 24843) (Fission yeast).